A 379-amino-acid polypeptide reads, in one-letter code: Neutral protease 2 homolog TRV_03208 (379 aa).

Positions 1 to 19 are cleaved as a signal peptide; that stretch reads MKFFTALAAVGALLAPALA. Positions 20–187 are excised as a propeptide; sequence LPTPASEEAS…DYFSKSLDKR (168 aa). 2 disulfides stabilise this stretch: Cys-193/Cys-263 and Cys-270/Cys-288. Asn-221 carries an N-linked (GlcNAc...) asparagine glycan. Position 312 (His-312) interacts with Zn(2+). Residue Glu-313 is part of the active site. Residues His-316 and Asp-327 each coordinate Zn(2+).

This sequence belongs to the peptidase M35 family. Requires Zn(2+) as cofactor.

It is found in the secreted. The enzyme catalyses Preferential cleavage of bonds with hydrophobic residues in P1'. Also 3-Asn-|-Gln-4 and 8-Gly-|-Ser-9 bonds in insulin B chain.. Its function is as follows. Secreted metalloproteinase that allows assimilation of proteinaceous substrates. Shows high activities on basic nuclear substrates such as histone and protamine. May be involved in virulence. The protein is Neutral protease 2 homolog TRV_03208 of Trichophyton verrucosum (strain HKI 0517).